The following is a 238-amino-acid chain: Purine nucleoside phosphorylase DeoD-type (238 aa).

An a purine D-ribonucleoside-binding site is contributed by histidine 4. Residues glycine 20, arginine 24, arginine 43, and 87 to 90 (RVGS) each bind phosphate. Residues 179 to 181 (EME) and 203 to 204 (SD) contribute to the a purine D-ribonucleoside site. Aspartate 204 functions as the Proton donor in the catalytic mechanism.

It belongs to the PNP/UDP phosphorylase family. As to quaternary structure, homohexamer; trimer of homodimers.

The catalysed reaction is a purine D-ribonucleoside + phosphate = a purine nucleobase + alpha-D-ribose 1-phosphate. The enzyme catalyses a purine 2'-deoxy-D-ribonucleoside + phosphate = a purine nucleobase + 2-deoxy-alpha-D-ribose 1-phosphate. Its function is as follows. Catalyzes the reversible phosphorolytic breakdown of the N-glycosidic bond in the beta-(deoxy)ribonucleoside molecules, with the formation of the corresponding free purine bases and pentose-1-phosphate. The chain is Purine nucleoside phosphorylase DeoD-type from Haemophilus ducreyi (strain 35000HP / ATCC 700724).